Reading from the N-terminus, the 415-residue chain is Small ribosomal subunit protein uS5m (415 aa).

The tract at residues 1-31 (MRRSGPELWKTLTSVSKSGQKKGRRNTRQPV) is disordered. Residues 131–197 (FETYCLEVKR…GMASRKIFHV (67 aa)) enclose the S5 DRBM domain. Residues 396-415 (GVEPMPLGIGLSHVVPKKDD) form a disordered region.

It belongs to the universal ribosomal protein uS5 family. As to quaternary structure, component of the mitochondrial ribosome small subunit (28S) which comprises a 12S rRNA and about 30 distinct proteins.

It localises to the mitochondrion. This chain is Small ribosomal subunit protein uS5m (mrps-5), found in Caenorhabditis briggsae.